Reading from the N-terminus, the 239-residue chain is Increased recombination centers protein 22-1 (239 aa).

The N-terminal stretch at 1–19 (MKLSTIFTAFAATIATVAG) is a signal peptide. The Lumenal portion of the chain corresponds to 20-161 (YETTGSKQTV…AAVSFFDPRL (142 aa)). A helical membrane pass occupies residues 162–182 (IFLELVLLITFAGLIYVGYEI). At 183-239 (WGKQYFKGVASVKAKKVSAAKASSPVASGPSTTSATGYDTNWIPESHLKQKKTKKVN) the chain is on the cytoplasmic side. Over residues 201–213 (AAKASSPVASGPS) the composition is skewed to low complexity. Positions 201-222 (AAKASSPVASGPSTTSATGYDT) are disordered.

It belongs to the IRC22 family.

It is found in the endoplasmic reticulum membrane. Is probably involved in a pathway contributing to genomic integrity. The polypeptide is Increased recombination centers protein 22-1 (IRC22-1) (Candida albicans (strain WO-1) (Yeast)).